We begin with the raw amino-acid sequence, 90 residues long: Small ribosomal subunit protein bS16 (90 aa).

The protein belongs to the bacterial ribosomal protein bS16 family.

The polypeptide is Small ribosomal subunit protein bS16 (Clostridioides difficile (strain 630) (Peptoclostridium difficile)).